A 167-amino-acid polypeptide reads, in one-letter code: L-alanine exporter AlaE (167 aa).

4 consecutive transmembrane segments (helical) span residues 25–45 (GTEF…TGII), 50–70 (IAGM…ALMI), 105–125 (FQVP…GGLV), and 129–149 (LGAA…LNWV).

The protein belongs to the AlaE exporter family.

It is found in the cell inner membrane. Its function is as follows. Exports L-alanine. This chain is L-alanine exporter AlaE, found in Pantoea sp. (strain At-9b).